Consider the following 453-residue polypeptide: Nuclear hormone receptor family member nhr-12 (453 aa).

Positions 1-37 are disordered; that stretch reads MEQIPQEQKTEPFLASFTTTEKLGTETPTTSITPNTQ. Low complexity predominate over residues 18–36; the sequence is TTTEKLGTETPTTSITPNT. The segment at residues 44 to 119 is a DNA-binding region (nuclear receptor); that stretch reads KPNCAVCNEV…VGMNPECVQN (76 aa). 2 consecutive NR C4-type zinc fingers follow at residues 47 to 67 and 83 to 107; these read CAVC…CRAC and CRAG…YDKC. In terms of domain architecture, NR LBD spans 178–451; the sequence is FSPASLPGLS…ENFVNIINGK (274 aa).

It belongs to the nuclear hormone receptor family.

It is found in the nucleus. Its function is as follows. Orphan nuclear receptor. This Caenorhabditis elegans protein is Nuclear hormone receptor family member nhr-12 (nhr-12).